Reading from the N-terminus, the 216-residue chain is Ribosomal RNA small subunit methyltransferase G (216 aa).

Residues Gly-83, Met-88, 134–135 (VE), and Arg-149 contribute to the S-adenosyl-L-methionine site.

Belongs to the methyltransferase superfamily. RNA methyltransferase RsmG family.

The protein localises to the cytoplasm. It carries out the reaction guanosine(527) in 16S rRNA + S-adenosyl-L-methionine = N(7)-methylguanosine(527) in 16S rRNA + S-adenosyl-L-homocysteine. Functionally, specifically methylates the N7 position of guanine in position 527 of 16S rRNA. This is Ribosomal RNA small subunit methyltransferase G from Pseudomonas entomophila (strain L48).